The chain runs to 69 residues: Sec-independent protein translocase protein TatA (69 aa).

The chain crosses the membrane as a helical span at residues 1-21 (MFPKLGMGELVVILLIVVILF). Residues 43–69 (SFSGEDEEKPSTPGATSSDEASKAKQA) form a disordered region.

The protein belongs to the TatA/E family. As to quaternary structure, the Tat system comprises two distinct complexes: a TatABC complex, containing multiple copies of TatA, TatB and TatC subunits, and a separate TatA complex, containing only TatA subunits. Substrates initially bind to the TatABC complex, which probably triggers association of the separate TatA complex to form the active translocon.

The protein localises to the cell inner membrane. Its function is as follows. Part of the twin-arginine translocation (Tat) system that transports large folded proteins containing a characteristic twin-arginine motif in their signal peptide across membranes. TatA could form the protein-conducting channel of the Tat system. This is Sec-independent protein translocase protein TatA from Anaeromyxobacter sp. (strain Fw109-5).